Consider the following 454-residue polypeptide: MPLRARSRKPGAGPAARAPQAGVSEPSFVAKSEDRLFKHLFEDYQRWVRPVEHLNDTIKIKFGLAISQLVDVDEKNQLMTTNVWLKQEWIHVKLRWNPEDYAGITSIRVPSDSIWIPDIVLYDNADGRFEGTSTKTVVKYDGTIAWTPPVNYKSSCTIDVTFFPFDLQNCSMKFGSWTYDGSQVDIILEDYEVDKRDFFDNGEWEIVTATGSKGNRTDGCCWYPFVTYSFIIRRLPLFYTLFLIIPCIGLSFLTVLVFYLPSNEAEKISLCTSVLVSLTVFLLVIEEIIPSSSKVIPLIGEYLVFTMIFVTLSIVITVFAINIHHRSSSTHNAMAPWVRKIFLHKLPKLLCMRSHVDRYFAQKEEKGNMSGSESSRNTLEAALDSIRYITRHVMKENEVREVVEDWKFIAQVLDRMFLWAFLLVSIIGSLVLFIPVIHKWASIIVPVHIGSTNT.

Positions 1–26 are disordered; it reads MPLRARSRKPGAGPAARAPQAGVSEP. A signal peptide spans 1–29; that stretch reads MPLRARSRKPGAGPAARAPQAGVSEPSFV. The span at 10 to 22 shows a compositional bias: low complexity; it reads PGAGPAARAPQAG. Over 30–240 the chain is Extracellular; it reads AKSEDRLFKH…IIRRLPLFYT (211 aa). N-linked (GlcNAc...) asparagine glycosylation is found at N55, N169, and N215. The cysteines at positions 156 and 170 are disulfide-linked. C220 and C221 are disulfide-bonded. 3 consecutive transmembrane segments (helical) span residues 241-261, 270-290, and 303-323; these read LFLI…FYLP, LCTS…EIIP, and LVFT…AINI. At 324-416 the chain is on the cytoplasmic side; the sequence is HHRSSSTHNA…KFIAQVLDRM (93 aa). A helical membrane pass occupies residues 417–437; that stretch reads FLWAFLLVSIIGSLVLFIPVI. Residues 438 to 454 are Extracellular-facing; sequence HKWASIIVPVHIGSTNT.

The protein belongs to the ligand-gated ion channel (TC 1.A.9) family. Acetylcholine receptor (TC 1.A.9.1) subfamily. Alpha-5/CHRNA5 sub-subfamily. As to quaternary structure, neuronal AChR that forms heteropentamers composed of two different type of subunits: alpha and non-alpha (beta). CHRNA5/alpha-5 subunit is only able to form functional nAChRs when co-assembled with another alpha subunit, can be combined to CHRNA4/alpha-4 or CHRNA3/alpha-3 and CHRNB4/beta-4 or CHRNB2/beta-2 to give rise to functional receptors. Interacts with LYPD6.

Its subcellular location is the synaptic cell membrane. The protein localises to the cell membrane. The catalysed reaction is Ca(2+)(in) = Ca(2+)(out). It carries out the reaction K(+)(in) = K(+)(out). It catalyses the reaction Na(+)(in) = Na(+)(out). Its activity is regulated as follows. Activated by a myriad of ligands such as acetylcholine, cytisine, nicotine, choline and epibatidine. In terms of biological role, component of neuronal acetylcholine receptors (nAChRs) that function as pentameric, ligand-gated cation channels with high calcium permeability among other activities. nAChRs are excitatory neurotrasnmitter receptors formed by a collection of nAChR subunits known to mediate synaptic transmission in the nervous system and the neuromuscular junction. Each nAchR subunit confers differential attributes to channel properties, including activation, deactivation and desensitization kinetics, pH sensitivity, cation permeability, and binding to allosteric modulators. Has an accessory rather than functional role and is only able to form functional nAChRs when co-assembled with another beta subunit. Participates in pentameric assemblies along with CHRNA3, CHRNA4, CHRNB2 and CHRNB4. Increases receptor sensitivity to acetylcholine and nicotine when associated with CHRNA4 and CHRNB2. Plays a role in nicotine addiction. This chain is Neuronal acetylcholine receptor subunit alpha-5 (CHRNA5), found in Gallus gallus (Chicken).